The primary structure comprises 505 residues: 2,3-bisphosphoglycerate-independent phosphoglycerate mutase (505 aa).

Mn(2+)-binding residues include D13 and S63. S63 acts as the Phosphoserine intermediate in catalysis. Substrate is bound by residues H124, R153–D154, R183, R189, R254–R257, and K330. The Mn(2+) site is built by D396, H400, D437, H438, and H456.

This sequence belongs to the BPG-independent phosphoglycerate mutase family. Monomer. The cofactor is Mn(2+).

It carries out the reaction (2R)-2-phosphoglycerate = (2R)-3-phosphoglycerate. It functions in the pathway carbohydrate degradation; glycolysis; pyruvate from D-glyceraldehyde 3-phosphate: step 3/5. Functionally, catalyzes the interconversion of 2-phosphoglycerate and 3-phosphoglycerate. The protein is 2,3-bisphosphoglycerate-independent phosphoglycerate mutase of Dinoroseobacter shibae (strain DSM 16493 / NCIMB 14021 / DFL 12).